Here is a 273-residue protein sequence, read N- to C-terminus: Putative pyruvate, phosphate dikinase regulatory protein (273 aa).

153 to 160 (GISRTSKT) contributes to the ADP binding site.

It belongs to the pyruvate, phosphate/water dikinase regulatory protein family. PDRP subfamily.

The enzyme catalyses N(tele)-phospho-L-histidyl/L-threonyl-[pyruvate, phosphate dikinase] + ADP = N(tele)-phospho-L-histidyl/O-phospho-L-threonyl-[pyruvate, phosphate dikinase] + AMP + H(+). It catalyses the reaction N(tele)-phospho-L-histidyl/O-phospho-L-threonyl-[pyruvate, phosphate dikinase] + phosphate + H(+) = N(tele)-phospho-L-histidyl/L-threonyl-[pyruvate, phosphate dikinase] + diphosphate. Its function is as follows. Bifunctional serine/threonine kinase and phosphorylase involved in the regulation of the pyruvate, phosphate dikinase (PPDK) by catalyzing its phosphorylation/dephosphorylation. The polypeptide is Putative pyruvate, phosphate dikinase regulatory protein (Rhizobium johnstonii (strain DSM 114642 / LMG 32736 / 3841) (Rhizobium leguminosarum bv. viciae)).